Reading from the N-terminus, the 361-residue chain is tRNA/tmRNA (uracil-C(5))-methyltransferase (361 aa).

S-adenosyl-L-methionine is bound by residues glutamine 185, tyrosine 213, asparagine 218, glutamate 234, and aspartate 294. The active-site Nucleophile is cysteine 319. Catalysis depends on glutamate 353, which acts as the Proton acceptor.

Belongs to the class I-like SAM-binding methyltransferase superfamily. RNA M5U methyltransferase family. TrmA subfamily.

It catalyses the reaction uridine(54) in tRNA + S-adenosyl-L-methionine = 5-methyluridine(54) in tRNA + S-adenosyl-L-homocysteine + H(+). The catalysed reaction is uridine(341) in tmRNA + S-adenosyl-L-methionine = 5-methyluridine(341) in tmRNA + S-adenosyl-L-homocysteine + H(+). In terms of biological role, dual-specificity methyltransferase that catalyzes the formation of 5-methyluridine at position 54 (m5U54) in all tRNAs, and that of position 341 (m5U341) in tmRNA (transfer-mRNA). This Pseudomonas putida (strain W619) protein is tRNA/tmRNA (uracil-C(5))-methyltransferase.